A 741-amino-acid chain; its full sequence is Copper-transporting ATPase (741 aa).

Residues 1-67 form the HMA domain; sequence MKESFYIEGM…LIEKLGYSPK (67 aa). Topologically, residues 1–83 are cytoplasmic; the sequence is MKESFYIEGM…KKEFFSPNVK (83 aa). Residues Cys12 and Cys15 each coordinate Cu cation. The chain crosses the membrane as a helical span at residues 84–104; sequence LALAVIFTLFVVYLSMGAMLS. Over 105-124 the chain is Extracellular; the sequence is PSLLPESLLTINNHSNFLNA. A helical transmembrane segment spans residues 125–144; that stretch reads CLQLIGTLIVMHLGRDFYIQ. The Cytoplasmic portion of the chain corresponds to 145-151; sequence GFKALWH. The helical transmembrane segment at 152 to 172 threads the bilayer; it reads RQPNMSSLIAIGTSAALISSL. Over 173-190 the chain is Extracellular; it reads WQLYFVYTSQWSYGHYYF. A helical transmembrane segment spans residues 191–211; it reads ESVCVILMFVMVGKRIENVSK. Topologically, residues 212 to 339 are cytoplasmic; it reads DKALDAMQAL…KAEISRLADK (128 aa). The chain crosses the membrane as a helical span at residues 340–362; it reads VSSVFVPSVIAIAILAFVVWLII. The Extracellular segment spans residues 363–375; the sequence is APKPDFWWNFGIA. A helical transmembrane segment spans residues 376–393; sequence LEVFVSVLVISCPCALGL. At 394–681 the chain is on the cytoplasmic side; that stretch reads ATPMSILVAN…KLSQATIKNI (288 aa). Asp431 acts as the 4-aspartylphosphate intermediate in catalysis. Residues Asp627 and Asp631 each contribute to the Mg(2+) site. A helical transmembrane segment spans residues 682–701; it reads KENLFWAFCYNSVFIPLACG. Topologically, residues 702 to 712 are extracellular; the sequence is VLYKANIMLSP. Residues 713–731 traverse the membrane as a helical segment; sequence AIAGLAMSLSSVSVVLNSQ. Over 732–741 the chain is Cytoplasmic; the sequence is RLRNFKIKDH.

It belongs to the cation transport ATPase (P-type) (TC 3.A.3) family. Type IB subfamily.

The protein resides in the cell membrane. The catalysed reaction is Cu(2+)(in) + ATP + H2O = Cu(2+)(out) + ADP + phosphate + H(+). Functionally, probably involved in copper export. In Helicobacter pylori (Campylobacter pylori), this protein is Copper-transporting ATPase (copA).